The primary structure comprises 135 residues: Retinol-binding protein 1 (135 aa).

W9 bears the Omega-N-methylarginine mark. Positions R22 to K32 are important for interaction with STRA6. All-trans-retinol-binding residues include K41, M63, and Q109.

Belongs to the calycin superfamily. Fatty-acid binding protein (FABP) family. In terms of assembly, interacts (only as retinol-free apoprotein) with STRA6. In terms of tissue distribution, detected in nearly all the tissues with higher expression in adult ovary, pancreas, pituitary gland and adrenal gland, and fetal liver.

Its subcellular location is the cytoplasm. It localises to the lipid droplet. Its function is as follows. Cytoplasmic retinol-binding protein. Accepts retinol from the transport protein STRA6, and thereby contributes to retinol uptake, storage and retinoid homeostasis. The chain is Retinol-binding protein 1 (RBP1) from Homo sapiens (Human).